The primary structure comprises 111 residues: Large ribosomal subunit protein uL22 (111 aa).

This sequence belongs to the universal ribosomal protein uL22 family. Part of the 50S ribosomal subunit.

This protein binds specifically to 23S rRNA; its binding is stimulated by other ribosomal proteins, e.g. L4, L17, and L20. It is important during the early stages of 50S assembly. It makes multiple contacts with different domains of the 23S rRNA in the assembled 50S subunit and ribosome. Its function is as follows. The globular domain of the protein is located near the polypeptide exit tunnel on the outside of the subunit, while an extended beta-hairpin is found that lines the wall of the exit tunnel in the center of the 70S ribosome. This is Large ribosomal subunit protein uL22 from Acholeplasma laidlawii.